Here is an 807-residue protein sequence, read N- to C-terminus: Glycerol-3-phosphate acyltransferase (807 aa).

The HXXXXD motif motif lies at 308–313; that stretch reads CHRSHM.

The protein belongs to the GPAT/DAPAT family.

It is found in the cell inner membrane. It catalyses the reaction sn-glycerol 3-phosphate + an acyl-CoA = a 1-acyl-sn-glycero-3-phosphate + CoA. It participates in phospholipid metabolism; CDP-diacylglycerol biosynthesis; CDP-diacylglycerol from sn-glycerol 3-phosphate: step 1/3. The polypeptide is Glycerol-3-phosphate acyltransferase (Shewanella putrefaciens (strain CN-32 / ATCC BAA-453)).